Reading from the N-terminus, the 396-residue chain is Tryptophan synthase beta chain (396 aa).

Residue Lys-86 is modified to N6-(pyridoxal phosphate)lysine.

This sequence belongs to the TrpB family. As to quaternary structure, tetramer of two alpha and two beta chains. Pyridoxal 5'-phosphate is required as a cofactor.

The catalysed reaction is (1S,2R)-1-C-(indol-3-yl)glycerol 3-phosphate + L-serine = D-glyceraldehyde 3-phosphate + L-tryptophan + H2O. It functions in the pathway amino-acid biosynthesis; L-tryptophan biosynthesis; L-tryptophan from chorismate: step 5/5. In terms of biological role, the beta subunit is responsible for the synthesis of L-tryptophan from indole and L-serine. The protein is Tryptophan synthase beta chain of Vibrio atlanticus (strain LGP32) (Vibrio splendidus (strain Mel32)).